The sequence spans 358 residues: Alanine racemase (358 aa).

K35 functions as the Proton acceptor; specific for D-alanine in the catalytic mechanism. Residue K35 is modified to N6-(pyridoxal phosphate)lysine. Residue R130 participates in substrate binding. Y255 functions as the Proton acceptor; specific for L-alanine in the catalytic mechanism. M303 serves as a coordination point for substrate.

It belongs to the alanine racemase family. Requires pyridoxal 5'-phosphate as cofactor.

The catalysed reaction is L-alanine = D-alanine. Its pathway is amino-acid biosynthesis; D-alanine biosynthesis; D-alanine from L-alanine: step 1/1. Its function is as follows. Catalyzes the interconversion of L-alanine and D-alanine. May also act on other amino acids. The protein is Alanine racemase (alr) of Shewanella sp. (strain MR-7).